Here is a 355-residue protein sequence, read N- to C-terminus: Peptide chain release factor 1 (355 aa).

Position 234 is an N5-methylglutamine (Q234).

Belongs to the prokaryotic/mitochondrial release factor family. Methylated by PrmC. Methylation increases the termination efficiency of RF1.

Its subcellular location is the cytoplasm. Peptide chain release factor 1 directs the termination of translation in response to the peptide chain termination codons UAG and UAA. This is Peptide chain release factor 1 from Metamycoplasma arthritidis (strain 158L3-1) (Mycoplasma arthritidis).